The following is a 451-amino-acid chain: Serine--tRNA ligase (451 aa).

258–260 (TSE) provides a ligand contact to L-serine. 289-291 (RSE) is a binding site for ATP. E312 lines the L-serine pocket. Residue 376-379 (EISS) participates in ATP binding. S411 serves as a coordination point for L-serine.

It belongs to the class-II aminoacyl-tRNA synthetase family. Type-1 seryl-tRNA synthetase subfamily. In terms of assembly, homodimer. The tRNA molecule binds across the dimer.

The protein resides in the cytoplasm. It carries out the reaction tRNA(Ser) + L-serine + ATP = L-seryl-tRNA(Ser) + AMP + diphosphate + H(+). It catalyses the reaction tRNA(Sec) + L-serine + ATP = L-seryl-tRNA(Sec) + AMP + diphosphate + H(+). It functions in the pathway aminoacyl-tRNA biosynthesis; selenocysteinyl-tRNA(Sec) biosynthesis; L-seryl-tRNA(Sec) from L-serine and tRNA(Sec): step 1/1. Catalyzes the attachment of serine to tRNA(Ser). Is also able to aminoacylate tRNA(Sec) with serine, to form the misacylated tRNA L-seryl-tRNA(Sec), which will be further converted into selenocysteinyl-tRNA(Sec). This chain is Serine--tRNA ligase, found in Bordetella bronchiseptica (strain ATCC BAA-588 / NCTC 13252 / RB50) (Alcaligenes bronchisepticus).